Reading from the N-terminus, the 291-residue chain is Ribosomal RNA small subunit methyltransferase H (291 aa).

S-adenosyl-L-methionine is bound by residues 36–38 (GGH), D55, A90, D102, and Q109.

It belongs to the methyltransferase superfamily. RsmH family.

The protein resides in the cytoplasm. It carries out the reaction cytidine(1402) in 16S rRNA + S-adenosyl-L-methionine = N(4)-methylcytidine(1402) in 16S rRNA + S-adenosyl-L-homocysteine + H(+). Its function is as follows. Specifically methylates the N4 position of cytidine in position 1402 (C1402) of 16S rRNA. The protein is Ribosomal RNA small subunit methyltransferase H of Thermosipho africanus (strain TCF52B).